Consider the following 406-residue polypeptide: Nuclear hormone receptor family member nhr-133 (406 aa).

Positions 8–83 (SGPCEICEQP…VGMNSSKFQN (76 aa)) form a DNA-binding region, nuclear receptor. Residues 11 to 31 (CEICEQPAHGNHFGVLSCRAC) form an NR C4-type zinc finger. Residues 47 to 66 (DRVCRKGNCIGNDLYRCKIC) form an NR C4-type; degenerate zinc finger. The 257-residue stretch at 150–406 (YSWSPNHYPN…YSHPEMFEFS (257 aa)) folds into the NR LBD domain.

Belongs to the nuclear hormone receptor family.

Its subcellular location is the nucleus. In terms of biological role, orphan nuclear receptor. The protein is Nuclear hormone receptor family member nhr-133 of Caenorhabditis elegans.